The following is an 80-amino-acid chain: uncharacterized protein (80 aa).

The N-terminal stretch at 1–15 (MVKLSFTLRFGDVWV) is a signal peptide.

This is an uncharacterized protein from Archaeoglobus fulgidus (strain ATCC 49558 / DSM 4304 / JCM 9628 / NBRC 100126 / VC-16).